The chain runs to 468 residues: ATP synthase subunit beta (468 aa).

155-162 (GGAGVGKT) provides a ligand contact to ATP.

Belongs to the ATPase alpha/beta chains family. As to quaternary structure, F-type ATPases have 2 components, CF(1) - the catalytic core - and CF(0) - the membrane proton channel. CF(1) has five subunits: alpha(3), beta(3), gamma(1), delta(1), epsilon(1). CF(0) has three main subunits: a(1), b(2) and c(9-12). The alpha and beta chains form an alternating ring which encloses part of the gamma chain. CF(1) is attached to CF(0) by a central stalk formed by the gamma and epsilon chains, while a peripheral stalk is formed by the delta and b chains.

It localises to the cell inner membrane. The enzyme catalyses ATP + H2O + 4 H(+)(in) = ADP + phosphate + 5 H(+)(out). Its function is as follows. Produces ATP from ADP in the presence of a proton gradient across the membrane. The catalytic sites are hosted primarily by the beta subunits. The sequence is that of ATP synthase subunit beta from Thermotoga neapolitana (strain ATCC 49049 / DSM 4359 / NBRC 107923 / NS-E).